The following is a 391-amino-acid chain: 23S rRNA (uracil(747)-C(5))-methyltransferase RlmC (391 aa).

Residues Cys5, Cys13, Cys16, and Cys95 each contribute to the [4Fe-4S] cluster site. Residues Gln220, Phe249, Glu276, and Asn322 each contribute to the S-adenosyl-L-methionine site. Cys349 acts as the Nucleophile in catalysis.

It belongs to the class I-like SAM-binding methyltransferase superfamily. RNA M5U methyltransferase family. RlmC subfamily.

It catalyses the reaction uridine(747) in 23S rRNA + S-adenosyl-L-methionine = 5-methyluridine(747) in 23S rRNA + S-adenosyl-L-homocysteine + H(+). Catalyzes the formation of 5-methyl-uridine at position 747 (m5U747) in 23S rRNA. This chain is 23S rRNA (uracil(747)-C(5))-methyltransferase RlmC, found in Actinobacillus pleuropneumoniae serotype 3 (strain JL03).